The chain runs to 60 residues: Putative insect toxin Acra6 (60 aa).

Residues 2–60 form the LCN-type CS-alpha/beta domain; that stretch reads RDGYIRRKDEFKFKCYVDGKDCDDVCKSEGGSAGYCTALGFLCYCAGLPDDKAWKPTSS. 3 disulfide bridges follow: Cys-16–Cys-37, Cys-23–Cys-44, and Cys-27–Cys-46.

This sequence belongs to the long (4 C-C) scorpion toxin superfamily. Sodium channel inhibitor family. Beta subfamily. In terms of tissue distribution, expressed by the venom gland.

It localises to the secreted. Its function is as follows. Depressant insect toxins cause a transient contraction paralysis followed by a slow flaccid paralysis. They bind voltage-independently to sodium channels (Nav) and block action potentials, primarily by depolarizing the axonal membrane and suppressing the sodium current. This Androctonus crassicauda (Arabian fat-tailed scorpion) protein is Putative insect toxin Acra6.